Reading from the N-terminus, the 508-residue chain is MNSTPSAPPLKMEALDLDIFQPSLTLGLGAILVVLMSFLAFLSYTPSFDKKVPAFTTHTHPFIGAADFMWRKNHFWRASMEESKTGTFSFWVGKKHVVGLSGEAARKTFMDSPGLDFVGGARIRGVSLLPNPPTPEIFRPGFHHGRSFFLRRMIDMQKTEMLKRCLPRFTSDSRGVFDELAKDPSGITNPAVACWHVVFAHDVILFCSEEIVDDPKAFPNLLQMIDILQGLSSFTKVFLPWLPTMAGMTRARRYKYMKSIFEPLVDRRMKRGAIRREDSLQLMIDNGDRRDLIIDFVIAAVIIAPTNSRILTGQMLNVMAAYPSWQEKAYAEIKALAKSYAKDPEAPLADQLDSMPLEAWEAGFPSIDLCFKELVRMWVAISMMRRNISSRTDEFIPAGSFAIYNTTETHFSEELYPDPHTFKPERWLEGNANVQKQAYGFVGWGEGRHPCPGKRWAKLQLNITIAYALAKFKWTSVDKTEHKKSTQESGHGVPLPSKLSKFSPREEN.

The helical transmembrane segment at 24–44 (LTLGLGAILVVLMSFLAFLSY) threads the bilayer. 2 N-linked (GlcNAc...) asparagine glycosylation sites follow: N387 and N405. C451 provides a ligand contact to heme. An N-linked (GlcNAc...) asparagine glycan is attached at N462. The interval 481–508 (EHKKSTQESGHGVPLPSKLSKFSPREEN) is disordered.

It belongs to the cytochrome P450 family. The cofactor is heme.

The protein resides in the membrane. It functions in the pathway secondary metabolite biosynthesis. In terms of biological role, cytochrome P450 monooxygenase; part of the gene cluster that mediates the biosynthesis of the dimeric xanthones cryptosporioptides. The pathway begins with the synthesis of atrochrysone thioester by the polyketide synthase dmx-nrPKS. The atrochrysone carboxyl ACP thioesterase dmxR1 then breaks the thioester bond and releases the atrochrysone carboxylic acid from dmx-nrPKS. Atrochrysone carboxylic acid is decarboxylated by the decarboxylase dmxR15, and oxidized by the anthrone oxygenase dmxR16 to yield emodin. Emodin is then reduced to emodin hydroquinone by the oxidoreductase dmxR7. A-ring reduction by the short chain dehydrogenase dmxR18, dehydration by the scytalone dehydratase-like protein dmxR17 and probable spontaneous re-oxidation, results in overall deoxygenation to chrysophanol. Baeyer-Villiger oxidation by the Baeyer-Villiger monooxygenase (BVMO) dmxR6 then yields monodictylactone in equilibrium with monodictyphenone. In the case of the cryptosporioptides biosynthesis, monodictylactone is reduced at C-12 to an alcohol (by the short chain dehydrogenases dmxR12 or dmxR8) and hydroxylated at C-5 by dmxR9, yielding the electron-rich aromatic which could eliminate H(2)O to form the ortho-quinonemethide, followed by tautomerisation to paraquinone and complete the formal reduction to produce the 10-methylgroup. Conjugate addition of C-4a-OH to the resulting paraquinone by the monooxygenase dmxR10 then gives cyclohexadienone, which is then reduced at C-5 by the short chain dehydrogenase dmxR3 to give the dihydroxanthone. The 6,7-epoxide in the cryptosporioptides could be introduced by the cytochrome P450 monooxygenase dmxL3. The highly reducing PKS dmxL2 manufactures butyrate, which is further carboxylated by dmxL1 to form ethylmalonate. It is not yet clear whether the carboxylation occurs while the butyrate is attached to the ACP of dmxL2, but this unusual fungal metabolite could then be esterified to O-5 by the O-acetyltransferase dmxR13. Finally, dimerization performed by dmxR5 gives the observed dimers cryptosporioptides A, B and C as the final products of the pathway. The protein is Cytochrome P450 monooxygenase dmxR5 of Cryptosporiopsis sp. (strain 8999).